A 140-amino-acid polypeptide reads, in one-letter code: Protein E6 (140 aa).

Zinc fingers lie at residues cysteine 26–cysteine 62 and cysteine 99–cysteine 135.

The protein belongs to the papillomaviridae E6 protein family. As to quaternary structure, forms homodimers. Interacts with ubiquitin-protein ligase UBE3A/E6-AP; this interaction stimulates UBE3A ubiquitin activity. Interacts with host BAK1.

Its subcellular location is the host cytoplasm. The protein resides in the host nucleus. Functionally, plays a major role in the induction and maintenance of cellular transformation. E6 associates with host UBE3A/E6-AP ubiquitin-protein ligase and modulates its activity. Protects host keratinocytes from apoptosis by mediating the degradation of host BAK1. May also inhibit host immune response. The chain is Protein E6 from Human papillomavirus type 1 (Human papillomavirus type 1a).